Reading from the N-terminus, the 184-residue chain is MADETKATDAGQRYAQSLFELTIENGSLQKVEADLKSLKAMVADSADLRRLIASPAFSAEDKGKGLTAVAKKAGFQPLTTKFLGLVAANGRTGDLLGAISAFVELSAKHRGVVTAEVVSAAALSPAQLKGVQTALAQALGKTPEVSTRVDPSLLGGLKVRVGSRLFDASLRSKLDSLKFALKRA.

The protein belongs to the ATPase delta chain family. As to quaternary structure, F-type ATPases have 2 components, F(1) - the catalytic core - and F(0) - the membrane proton channel. F(1) has five subunits: alpha(3), beta(3), gamma(1), delta(1), epsilon(1). F(0) has three main subunits: a(1), b(2) and c(10-14). The alpha and beta chains form an alternating ring which encloses part of the gamma chain. F(1) is attached to F(0) by a central stalk formed by the gamma and epsilon chains, while a peripheral stalk is formed by the delta and b chains.

It is found in the cell inner membrane. In terms of biological role, f(1)F(0) ATP synthase produces ATP from ADP in the presence of a proton or sodium gradient. F-type ATPases consist of two structural domains, F(1) containing the extramembraneous catalytic core and F(0) containing the membrane proton channel, linked together by a central stalk and a peripheral stalk. During catalysis, ATP synthesis in the catalytic domain of F(1) is coupled via a rotary mechanism of the central stalk subunits to proton translocation. This protein is part of the stalk that links CF(0) to CF(1). It either transmits conformational changes from CF(0) to CF(1) or is implicated in proton conduction. The protein is ATP synthase subunit delta of Caulobacter vibrioides (strain NA1000 / CB15N) (Caulobacter crescentus).